The chain runs to 676 residues: Forkhead box protein biniou (676 aa).

Disordered stretches follow at residues 22–50 (YHDPRAHPPFSHPHAHSHPHQHTHTGHPY), 131–160 (AHSAGSASPQSNSKTPTDLPQDLQYASSST), 203–232 (QEQAGQQQPQQLPAQQLQHSPGGGYMSRIS), 249–312 (NYSS…PEKP), and 583–651 (IQHA…AYLP). Residues 34–48 (PHAHSHPHQHTHTGH) show a composition bias toward basic residues. The segment covering 133–160 (SAGSASPQSNSKTPTDLPQDLQYASSST) has biased composition (polar residues). The span at 203–220 (QEQAGQQQPQQLPAQQLQ) shows a compositional bias: low complexity. Residues 257–273 (PAKSLNGSESSPPSQNH) show a composition bias toward polar residues. The fork-head DNA-binding region spans 311–408 (KPALSYINMI…DEGSLRRRPR (98 aa)). Residues 583 to 593 (IQHAQAQAQAQ) are compositionally biased toward low complexity. The segment covering 594 to 611 (AHHHHHQHHASHPSHSHQ) has biased composition (basic residues). Low complexity predominate over residues 612 to 625 (GHGSMHQNHGTSST). Positions 637 to 647 (GIDHSPIDRKP) are enriched in basic and acidic residues.

As to quaternary structure, binds to DNA. In embryo, expressed in all types of visceral muscles and their progenitors (at protein level). In late stage 10 embryo, expressed in the caudal visceral mesoderm and trunk and hindgut visceral mesoderm progenitors.

It localises to the nucleus. Functionally, component of a regulatory network controlling visceral mesoderm development and midgut morphogenesis. Transcriptional regulator involved in the activation of a large number of genes in the visceral mesoderm including betaTub60D, dpp and Hand. Binds to and regulates a number of enhancers driving expression in the visceral mesoderm in a temporally and spatially restricted manner. Also to binds to enhancers cooperatively with activators, such as bap or HLH54F, to coregulate expression of shared target genes in the visceral mesoderm. Binds to the Ndg enhancer and drives expression of Ndg in the late visceral musculature. May be involved in the transcriptional regulation of wupA in the visceral mesoderm. Plays an indirect role in the later stages of salivary gland positioning. The polypeptide is Forkhead box protein biniou (bin) (Drosophila melanogaster (Fruit fly)).